A 598-amino-acid polypeptide reads, in one-letter code: Vacuolin-A (598 aa).

Positions 482–539 (IKTTEARLKAETDNIALEQRNKAIISESQAKLSSAQREAESLLITAEAQKKASELQGE) form a coiled coil.

The protein belongs to the vacuolin family.

The protein localises to the endosome membrane. Its subcellular location is the lysosome. This is Vacuolin-A (vacA) from Dictyostelium discoideum (Social amoeba).